We begin with the raw amino-acid sequence, 249 residues long: Large ribosomal subunit protein uL4 (249 aa).

This sequence belongs to the universal ribosomal protein uL4 family. In terms of assembly, part of the 50S ribosomal subunit.

Its function is as follows. One of the primary rRNA binding proteins, this protein initially binds near the 5'-end of the 23S rRNA. It is important during the early stages of 50S assembly. It makes multiple contacts with different domains of the 23S rRNA in the assembled 50S subunit and ribosome. Functionally, forms part of the polypeptide exit tunnel. This is Large ribosomal subunit protein uL4 from Methanoculleus marisnigri (strain ATCC 35101 / DSM 1498 / JR1).